A 542-amino-acid chain; its full sequence is CTP synthase (542 aa).

Residues 1-265 (MTRYIFVTGG…DDFVVERFGL (265 aa)) form an amidoligase domain region. Ser-13 contacts CTP. UTP is bound at residue Ser-13. ATP-binding positions include 14–19 (SLGKGI) and Asp-71. Mg(2+) contacts are provided by Asp-71 and Glu-139. Residues 146–148 (DIE), 186–191 (KTKPTQ), and Lys-222 contribute to the CTP site. UTP contacts are provided by residues 186-191 (KTKPTQ) and Lys-222. The 252-residue stretch at 290 to 541 (TIAMVGKYME…VKAALAQKNK (252 aa)) folds into the Glutamine amidotransferase type-1 domain. Gly-351 contacts L-glutamine. Cys-378 serves as the catalytic Nucleophile; for glutamine hydrolysis. L-glutamine is bound by residues 379–382 (LGMQ), Glu-402, and Arg-469. Active-site residues include His-514 and Glu-516.

It belongs to the CTP synthase family. In terms of assembly, homotetramer.

The enzyme catalyses UTP + L-glutamine + ATP + H2O = CTP + L-glutamate + ADP + phosphate + 2 H(+). It catalyses the reaction L-glutamine + H2O = L-glutamate + NH4(+). It carries out the reaction UTP + NH4(+) + ATP = CTP + ADP + phosphate + 2 H(+). The protein operates within pyrimidine metabolism; CTP biosynthesis via de novo pathway; CTP from UDP: step 2/2. Its activity is regulated as follows. Allosterically activated by GTP, when glutamine is the substrate; GTP has no effect on the reaction when ammonia is the substrate. The allosteric effector GTP functions by stabilizing the protein conformation that binds the tetrahedral intermediate(s) formed during glutamine hydrolysis. Inhibited by the product CTP, via allosteric rather than competitive inhibition. Catalyzes the ATP-dependent amination of UTP to CTP with either L-glutamine or ammonia as the source of nitrogen. Regulates intracellular CTP levels through interactions with the four ribonucleotide triphosphates. The chain is CTP synthase from Pseudomonas putida (strain ATCC 700007 / DSM 6899 / JCM 31910 / BCRC 17059 / LMG 24140 / F1).